Consider the following 281-residue polypeptide: MLRVAVPNKGALSESASEILSEAGYRRRSDPKDLTVVDPANNVEFFFLRPKDIAIYVGSGELDLGITGRDLAADADAPVRERLALGFGSSTFRYAAPAGQDWQIADLAGRRIATAYPNLVRKDLADKGIDATVIRLDGAVEISIQLGVADVIADIVGSGRTLGLHNLVAFGESLCDSEAILIERADSDPDPARDQLAARVQGVVFGQQYLMLDYDCPRTVLDKATEVTPGLESPTIAPLADPAWVAVRALVPRRDVNAIMDELAAIGAKAILASDIRFCRF.

This sequence belongs to the ATP phosphoribosyltransferase family. Long subfamily. In terms of assembly, equilibrium between an active dimeric form, an inactive hexameric form and higher aggregates. Interconversion between the various forms is largely reversible and is influenced by the natural substrates and inhibitors of the enzyme. It depends on Mg(2+) as a cofactor.

The protein localises to the cytoplasm. The enzyme catalyses 1-(5-phospho-beta-D-ribosyl)-ATP + diphosphate = 5-phospho-alpha-D-ribose 1-diphosphate + ATP. Its pathway is amino-acid biosynthesis; L-histidine biosynthesis; L-histidine from 5-phospho-alpha-D-ribose 1-diphosphate: step 1/9. Feedback inhibited by histidine. In terms of biological role, catalyzes the condensation of ATP and 5-phosphoribose 1-diphosphate to form N'-(5'-phosphoribosyl)-ATP (PR-ATP). Has a crucial role in the pathway because the rate of histidine biosynthesis seems to be controlled primarily by regulation of HisG enzymatic activity. The polypeptide is ATP phosphoribosyltransferase (Mycolicibacterium gilvum (strain PYR-GCK) (Mycobacterium gilvum (strain PYR-GCK))).